A 339-amino-acid chain; its full sequence is DNA-directed RNA polymerase subunit alpha (339 aa).

The segment at 1–235 is alpha N-terminal domain (alpha-NTD); the sequence is MVIQKNWQEL…DQLQVFVNFE (235 aa). The segment at 251 to 339 is alpha C-terminal domain (alpha-CTD); it reads FNPALLKKVD…DLAKRFEEHY (89 aa).

It belongs to the RNA polymerase alpha chain family. Homodimer. The RNAP catalytic core consists of 2 alpha, 1 beta, 1 beta' and 1 omega subunit. When a sigma factor is associated with the core the holoenzyme is formed, which can initiate transcription.

It catalyses the reaction RNA(n) + a ribonucleoside 5'-triphosphate = RNA(n+1) + diphosphate. DNA-dependent RNA polymerase catalyzes the transcription of DNA into RNA using the four ribonucleoside triphosphates as substrates. In Methylorubrum populi (strain ATCC BAA-705 / NCIMB 13946 / BJ001) (Methylobacterium populi), this protein is DNA-directed RNA polymerase subunit alpha.